Consider the following 466-residue polypeptide: Methylenetetrahydrofolate--tRNA-(uracil-5-)-methyltransferase TrmFO (466 aa).

16–21 is an FAD binding site; that stretch reads GGGMAG.

Belongs to the MnmG family. TrmFO subfamily. Requires FAD as cofactor.

It is found in the cytoplasm. The catalysed reaction is uridine(54) in tRNA + (6R)-5,10-methylene-5,6,7,8-tetrahydrofolate + NADH + H(+) = 5-methyluridine(54) in tRNA + (6S)-5,6,7,8-tetrahydrofolate + NAD(+). It carries out the reaction uridine(54) in tRNA + (6R)-5,10-methylene-5,6,7,8-tetrahydrofolate + NADPH + H(+) = 5-methyluridine(54) in tRNA + (6S)-5,6,7,8-tetrahydrofolate + NADP(+). In terms of biological role, catalyzes the folate-dependent formation of 5-methyl-uridine at position 54 (M-5-U54) in all tRNAs. In Maricaulis maris (strain MCS10) (Caulobacter maris), this protein is Methylenetetrahydrofolate--tRNA-(uracil-5-)-methyltransferase TrmFO.